Reading from the N-terminus, the 510-residue chain is ETS translocation variant 5 (510 aa).

The segment at 132 to 245 (KPLTPPATPL…PGDSRPSYHR (114 aa)) is disordered. Positions 163–174 (TPGAGPVQGVGP) are enriched in low complexity. Residues 211-224 (QYPSEQRFQRQLSE) show a composition bias toward polar residues. At Ser-248 the chain carries Phosphoserine. A Glycyl lysine isopeptide (Lys-Gly) (interchain with G-Cter in SUMO2) cross-link involves residue Lys-350. The ETS DNA-binding region spans 368-448 (LQLWQFLVTL…AGERYVYKFV (81 aa)).

It belongs to the ETS family. Interacts (via C-terminal) with ZMYM5 (via N-terminal 120 amino acid region). In terms of tissue distribution, in the brain, expressed predominantly in the cerebral cortex, the amygdala and the hypothalamus. Within the cerebral cortex, there is conspicuously high expression in cortical layers 2, 4 and 6 while expression is almost absent from layers 1, 3 and 5. High expression is also observed in the dorsal and ventral endopiriform claustrum. Strong expression is observed in limited parts of the amygdala including the basolateral amygdaloid nucleus, the bed stria terminalis and the central amygdaloid nucleus. Low to moderate levels are found in the hypothalamus while expression is almost absent in the thalamus. Hypothalamic expression is seen in the dorsomedial hypothalamic nucleus and also the central, dorsomedial and ventrolateral parts of the ventromedial hypothalamic nucleus. Strong expression is also identified in the nigrostriatal tract. In the mesencephalon, expression is restricted to the ventral tegmental area including the parabrachial pigmented nucleus. In the hippocampus, strongly expressed in the pyramidal cell layer. Some expression is also found in the lacunosum moleculare layer. Low levels of expression in the cerebellum, including the granular, molecular and Purkinje cell layers.

The protein localises to the nucleus. Binds to DNA sequences containing the consensus nucleotide core sequence 5'-GGAA.-3'. This is ETS translocation variant 5 (Etv5) from Mus musculus (Mouse).